A 599-amino-acid polypeptide reads, in one-letter code: Aspartate--tRNA(Asp/Asn) ligase (599 aa).

Glu-174 is an L-aspartate binding site. Residues 198 to 201 are aspartate; that stretch reads QLFK. Arg-220 serves as a coordination point for L-aspartate. ATP-binding positions include 220–222 and Gln-229; that span reads RDE. His-457 contributes to the L-aspartate binding site. Glu-491 lines the ATP pocket. L-aspartate is bound at residue Arg-498. 543–546 contributes to the ATP binding site; that stretch reads GLDR.

This sequence belongs to the class-II aminoacyl-tRNA synthetase family. Type 1 subfamily. Homodimer.

The protein localises to the cytoplasm. The catalysed reaction is tRNA(Asx) + L-aspartate + ATP = L-aspartyl-tRNA(Asx) + AMP + diphosphate. In terms of biological role, aspartyl-tRNA synthetase with relaxed tRNA specificity since it is able to aspartylate not only its cognate tRNA(Asp) but also tRNA(Asn). Reaction proceeds in two steps: L-aspartate is first activated by ATP to form Asp-AMP and then transferred to the acceptor end of tRNA(Asp/Asn). The chain is Aspartate--tRNA(Asp/Asn) ligase from Paraburkholderia phymatum (strain DSM 17167 / CIP 108236 / LMG 21445 / STM815) (Burkholderia phymatum).